The primary structure comprises 432 residues: Adenylosuccinate synthetase (432 aa).

GTP is bound by residues 13–19 (GDEGKGK) and 41–43 (GHT). Residue D14 is the Proton acceptor of the active site. Residues D14 and G41 each coordinate Mg(2+). Residues 14 to 17 (DEGK), 39 to 42 (NAGH), T130, R144, Q225, T240, and R304 each bind IMP. Residue H42 is the Proton donor of the active site. 300–306 (ATTGRRR) provides a ligand contact to substrate. Residues R306, 332 to 334 (KLD), and 415 to 417 (STG) each bind GTP.

The protein belongs to the adenylosuccinate synthetase family. As to quaternary structure, homodimer. The cofactor is Mg(2+).

The protein localises to the cytoplasm. The enzyme catalyses IMP + L-aspartate + GTP = N(6)-(1,2-dicarboxyethyl)-AMP + GDP + phosphate + 2 H(+). Its pathway is purine metabolism; AMP biosynthesis via de novo pathway; AMP from IMP: step 1/2. Functionally, plays an important role in the de novo pathway of purine nucleotide biosynthesis. Catalyzes the first committed step in the biosynthesis of AMP from IMP. The chain is Adenylosuccinate synthetase from Salmonella paratyphi C (strain RKS4594).